Consider the following 483-residue polypeptide: Regulatory protein ViaA (483 aa).

The protein belongs to the ViaA family. As to quaternary structure, homodimer. Interacts with RavA.

The protein localises to the cytoplasm. Component of the RavA-ViaA chaperone complex, which may act on the membrane to optimize the function of some of the respiratory chains. ViaA stimulates the ATPase activity of RavA. In Escherichia coli O127:H6 (strain E2348/69 / EPEC), this protein is Regulatory protein ViaA.